The sequence spans 171 residues: Adenine phosphoribosyltransferase (171 aa).

Belongs to the purine/pyrimidine phosphoribosyltransferase family. In terms of assembly, homodimer.

The protein resides in the cytoplasm. It catalyses the reaction AMP + diphosphate = 5-phospho-alpha-D-ribose 1-diphosphate + adenine. The protein operates within purine metabolism; AMP biosynthesis via salvage pathway; AMP from adenine: step 1/1. Functionally, catalyzes a salvage reaction resulting in the formation of AMP, that is energically less costly than de novo synthesis. The polypeptide is Adenine phosphoribosyltransferase (apt) (Prochlorococcus marinus subsp. pastoris (strain CCMP1986 / NIES-2087 / MED4)).